The following is a 297-amino-acid chain: Vacuolar protein sorting-associated protein 26 (297 aa).

It belongs to the VPS26 family. In terms of assembly, component of the retromer complex, composed of VPS26, VPS29 and VPS35. As part of the retromer complex, interacts with the sorting receptor SORTLR/sortilin. Interacts with GTPase RAB7.

Plays a role in vesicular protein sorting. Component of the membrane-associated retromer complex which is essential in endosome-to-Golgi retrograde transport. The protein is Vacuolar protein sorting-associated protein 26 of Plasmodium falciparum (isolate 3D7).